The following is a 133-amino-acid chain: Ribosome-binding factor A (133 aa).

The protein belongs to the RbfA family. In terms of assembly, monomer. Binds 30S ribosomal subunits, but not 50S ribosomal subunits or 70S ribosomes.

Its subcellular location is the cytoplasm. One of several proteins that assist in the late maturation steps of the functional core of the 30S ribosomal subunit. Associates with free 30S ribosomal subunits (but not with 30S subunits that are part of 70S ribosomes or polysomes). Required for efficient processing of 16S rRNA. May interact with the 5'-terminal helix region of 16S rRNA. The protein is Ribosome-binding factor A of Acinetobacter baylyi (strain ATCC 33305 / BD413 / ADP1).